Here is a 465-residue protein sequence, read N- to C-terminus: UDP-N-acetylmuramate--L-alanine ligase (465 aa).

115 to 121 (GTHGKTT) contributes to the ATP binding site.

The protein belongs to the MurCDEF family.

Its subcellular location is the cytoplasm. It carries out the reaction UDP-N-acetyl-alpha-D-muramate + L-alanine + ATP = UDP-N-acetyl-alpha-D-muramoyl-L-alanine + ADP + phosphate + H(+). It functions in the pathway cell wall biogenesis; peptidoglycan biosynthesis. Functionally, cell wall formation. The polypeptide is UDP-N-acetylmuramate--L-alanine ligase (Renibacterium salmoninarum (strain ATCC 33209 / DSM 20767 / JCM 11484 / NBRC 15589 / NCIMB 2235)).